The primary structure comprises 542 residues: CTP synthase (542 aa).

An amidoligase domain region spans residues 1-265; it reads MTRYIFVTGG…DQLVIERFGL (265 aa). Ser13 is a CTP binding site. Ser13 is a UTP binding site. ATP contacts are provided by residues 14–19 and Asp71; that span reads SLGKGI. Mg(2+) is bound by residues Asp71 and Glu139. CTP-binding positions include 146–148, 186–191, and Lys222; these read DIE and KTKPTQ. UTP contacts are provided by residues 186–191 and Lys222; that span reads KTKPTQ. The Glutamine amidotransferase type-1 domain occupies 290–541; the sequence is TIAMVGKYME…VEAALANKKG (252 aa). Position 351 (Gly351) interacts with L-glutamine. Catalysis depends on Cys378, which acts as the Nucleophile; for glutamine hydrolysis. L-glutamine contacts are provided by residues 379–382, Glu402, and Arg469; that span reads LGMQ. Catalysis depends on residues His514 and Glu516.

It belongs to the CTP synthase family. As to quaternary structure, homotetramer.

The enzyme catalyses UTP + L-glutamine + ATP + H2O = CTP + L-glutamate + ADP + phosphate + 2 H(+). It catalyses the reaction L-glutamine + H2O = L-glutamate + NH4(+). The catalysed reaction is UTP + NH4(+) + ATP = CTP + ADP + phosphate + 2 H(+). The protein operates within pyrimidine metabolism; CTP biosynthesis via de novo pathway; CTP from UDP: step 2/2. Its activity is regulated as follows. Allosterically activated by GTP, when glutamine is the substrate; GTP has no effect on the reaction when ammonia is the substrate. The allosteric effector GTP functions by stabilizing the protein conformation that binds the tetrahedral intermediate(s) formed during glutamine hydrolysis. Inhibited by the product CTP, via allosteric rather than competitive inhibition. Its function is as follows. Catalyzes the ATP-dependent amination of UTP to CTP with either L-glutamine or ammonia as the source of nitrogen. Regulates intracellular CTP levels through interactions with the four ribonucleotide triphosphates. The chain is CTP synthase from Marinobacter nauticus (strain ATCC 700491 / DSM 11845 / VT8) (Marinobacter aquaeolei).